We begin with the raw amino-acid sequence, 419 residues long: O-methyltransferase desB (419 aa).

Residues 255–256, aspartate 280, 306–307, and arginine 323 each bind S-adenosyl-L-methionine; these read GG and DF. The active-site Proton acceptor is histidine 326.

It belongs to the class I-like SAM-binding methyltransferase superfamily. Cation-independent O-methyltransferase family. The cofactor is S-adenosyl-L-methionine.

It participates in secondary metabolite biosynthesis. Its function is as follows. Non-reducing polyketide synthase; part of the gene cluster that mediates the biosynthesis of the bicoumarin desertorin. The non-reducing polyketide synthase desS first catalyzes the formation of the pentaketidic 4,7-dihydroxy-5-methylcoumarin from acetyl coenzyme A and 4 malonyl coenzyme A molecules. Further O-methylation by desB leads to the formation of 7-demethylsiderin. Then, an oxidative phenol coupling catalyzed by the cytochrome P450 monooxygenase desC forms the 6,8'-dimer M-desertorin A via dimerization the monomeric precursor, 7-demethylsiderin. M-desertorin A is further converted to M-desertorin C. This is O-methyltransferase desB from Aspergillus desertorum (Emericella desertorum).